Here is a 274-residue protein sequence, read N- to C-terminus: tRNA uridine(34) hydroxylase (274 aa).

In terms of domain architecture, Rhodanese spans S121–N217. The Cysteine persulfide intermediate role is filled by C177.

This sequence belongs to the TrhO family.

The enzyme catalyses uridine(34) in tRNA + AH2 + O2 = 5-hydroxyuridine(34) in tRNA + A + H2O. In terms of biological role, catalyzes oxygen-dependent 5-hydroxyuridine (ho5U) modification at position 34 in tRNAs. This Ehrlichia canis (strain Jake) protein is tRNA uridine(34) hydroxylase.